Consider the following 324-residue polypeptide: R2-like ligand binding oxidase (324 aa).

Mn(2+) contacts are provided by E79, E112, and H115. Residues 82–173 (VTEDIQPFMK…VNQVRASVTY (92 aa)) constitute a cross-link (3-(O4'-tyrosyl)-valine (Val-Tyr)). Residue E112 participates in Fe cation binding. Residues E178, E213, and H216 each contribute to the Fe cation site. A disordered region spans residues 304 to 324 (PEALEEKFGEEDAKAMSEAAG). Basic and acidic residues predominate over residues 307–318 (LEEKFGEEDAKA).

This sequence belongs to the ribonucleoside diphosphate reductase small chain family. R2-like ligand binding oxidase subfamily. As to quaternary structure, homodimer. The cofactor is Fe cation. Mn(2+) is required as a cofactor.

Functionally, probable oxidase. This chain is R2-like ligand binding oxidase, found in Rhodococcus jostii (strain RHA1).